The sequence spans 147 residues: Large ribosomal subunit protein uL15 (147 aa).

Residues 1–58 (MRLHDLKPAEGSTKKKKRVGRGIGSGHGKTSGRGHKGQNARSGGGVRPGFEGGQMPLT) form a disordered region. Over residues 42–52 (SGGGVRPGFEG) the composition is skewed to gly residues.

Belongs to the universal ribosomal protein uL15 family. In terms of assembly, part of the 50S ribosomal subunit.

Functionally, binds to the 23S rRNA. This Caldanaerobacter subterraneus subsp. tengcongensis (strain DSM 15242 / JCM 11007 / NBRC 100824 / MB4) (Thermoanaerobacter tengcongensis) protein is Large ribosomal subunit protein uL15.